The chain runs to 260 residues: Endomucin (260 aa).

The signal sequence occupies residues 1-18; that stretch reads MELLQVTILFLLPSICSS. Residues N19, N28, N97, and N103 are each glycosylated (N-linked (GlcNAc...) asparagine). Residues 19-189 lie on the Extracellular side of the membrane; the sequence is NSTGVLEAAN…TSATSRSYSS (171 aa). Polar residues-rich tracts occupy residues 119–133 and 145–170; these read QSSK…SIKT and ASPS…SQVI. Residues 119-182 form a disordered region; sequence QSSKPKTETQ…EGGKNASTSA (64 aa). Residues N163 and N177 are each glycosylated (N-linked (GlcNAc...) asparagine). The helical transmembrane segment at 190–210 threads the bilayer; sequence IILPVVIALIVITLSVFVLVG. The Cytoplasmic segment spans residues 211–260; the sequence is LYRMCWKADPGTPENGNDQPQSDKESVKLLTVKTISHESGEHSAQGKTKN. The residue at position 236 (S236) is a Phosphoserine.

Post-translationally, highly O-glycosylated. Sialic acid-rich glycoprotein.

It localises to the membrane. Functionally, endothelial sialomucin, also called endomucin or mucin-like sialoglycoprotein, which interferes with the assembly of focal adhesion complexes and inhibits interaction between cells and the extracellular matrix. The polypeptide is Endomucin (EMCN) (Pongo abelii (Sumatran orangutan)).